A 78-amino-acid chain; its full sequence is Large ribosomal subunit protein bL28 (78 aa).

It belongs to the bacterial ribosomal protein bL28 family.

In Alcanivorax borkumensis (strain ATCC 700651 / DSM 11573 / NCIMB 13689 / SK2), this protein is Large ribosomal subunit protein bL28.